A 640-amino-acid polypeptide reads, in one-letter code: Threonine--tRNA ligase (640 aa).

One can recognise a TGS domain in the interval 1-61 (MPVITLPDGS…SNDATLQIIT (61 aa)). A catalytic region spans residues 242 to 533 (DHRKIGKQLD…LIEHYAGVFP (292 aa)). Residues Cys-333, His-384, and His-510 each contribute to the Zn(2+) site.

It belongs to the class-II aminoacyl-tRNA synthetase family. In terms of assembly, homodimer. The cofactor is Zn(2+).

The protein localises to the cytoplasm. The enzyme catalyses tRNA(Thr) + L-threonine + ATP = L-threonyl-tRNA(Thr) + AMP + diphosphate + H(+). Its function is as follows. Catalyzes the attachment of threonine to tRNA(Thr) in a two-step reaction: L-threonine is first activated by ATP to form Thr-AMP and then transferred to the acceptor end of tRNA(Thr). Also edits incorrectly charged L-seryl-tRNA(Thr). This Pseudomonas putida (strain ATCC 700007 / DSM 6899 / JCM 31910 / BCRC 17059 / LMG 24140 / F1) protein is Threonine--tRNA ligase.